Here is a 311-residue protein sequence, read N- to C-terminus: Homoserine kinase (311 aa).

P88–A98 is an ATP binding site.

Belongs to the GHMP kinase family. Homoserine kinase subfamily.

It localises to the cytoplasm. The catalysed reaction is L-homoserine + ATP = O-phospho-L-homoserine + ADP + H(+). It functions in the pathway amino-acid biosynthesis; L-threonine biosynthesis; L-threonine from L-aspartate: step 4/5. Catalyzes the ATP-dependent phosphorylation of L-homoserine to L-homoserine phosphate. This Saccharolobus islandicus (strain Y.N.15.51 / Yellowstone #2) (Sulfolobus islandicus) protein is Homoserine kinase.